Here is an 85-residue protein sequence, read N- to C-terminus: MSEVHKAISAHSSKQHEHIKAFMRLENMRELAIEEAVAKCRNDEPYTTDAINEITEQMNQLAKKGIVPTRRLVSKEMVREYVSRM.

This is an uncharacterized protein from Bacillus subtilis (strain 168).